Consider the following 113-residue polypeptide: Hydrogenase maturation factor HypA (113 aa).

H2 contributes to the Ni(2+) binding site. Residues C73, C76, C89, and C92 each coordinate Zn(2+).

It belongs to the HypA/HybF family.

Functionally, involved in the maturation of [NiFe] hydrogenases. Required for nickel insertion into the metal center of the hydrogenase. This Actinobacillus succinogenes (strain ATCC 55618 / DSM 22257 / CCUG 43843 / 130Z) protein is Hydrogenase maturation factor HypA.